A 303-amino-acid polypeptide reads, in one-letter code: Phytochrome-associated serine/threonine-protein phosphatase 3 (303 aa).

Zn(2+) contacts are provided by aspartate 50, histidine 52, aspartate 78, and asparagine 110. The Proton donor role is filled by histidine 111. The Zn(2+) site is built by histidine 160 and histidine 234.

This sequence belongs to the PPP phosphatase family. PP-6 (PP-V) subfamily. In terms of assembly, interacts with PHYA and PHYB, mostly when they are phosphorylated and in Pfr forms. Interacts with TAP46. Interacts with NRP. Interacts with PIN1 and PIN2. Interacts with ABI5. Interacts with PIF3 and PIF4. Protein phosphatase 6 (PP6) holoenzyme is a heterotrimeric complex formed by the catalytic subunit FYPP, a SAPS domain-containing subunit (SAL) and a protein phosphatase 2A regulatory subunit A (PP2AA). It depends on Zn(2+) as a cofactor. As to expression, mostly expressed in flowers. Also detected to a lower extent in stems and leaves. Expressed in roots.

It localises to the cytoplasm. It catalyses the reaction O-phospho-L-seryl-[protein] + H2O = L-seryl-[protein] + phosphate. The catalysed reaction is O-phospho-L-threonyl-[protein] + H2O = L-threonyl-[protein] + phosphate. Catalytic subunit of protein phosphatase 6 (PP6). Dephosphorylates phosphorylated phytochromes, with a preference toward Pfr forms. Plays a major role in the photoperiodic control of flowering time in long days by modulating phytochrome signals in flowering time control. Involved in the regulation of polar auxin transport in roots. Dephosphorylates directly the auxin efflux carriers PIN1 and PIN2, thus promoting their proper polar localization in root cell plasma membrane. Acts antagonistically with the protein kinase PID to regulate the reversible phosphorylation of PIN and polar targeting, subsequently impacting polar auxin transport and plant development. Involved in the regulation of abscisic acid (ABA) signaling during seed germination and postgermination seedling growth. Functions as a negative regulator of ABA signaling through direct dephosphorylation and destabilization of ABI5 protein. Acts antagonistically with the protein kinase SRK2E/SNRK2.6 to regulate ABI5 phosphorylation and ABA responses. Involved in the regulation of phosphorylation status in hypocotyl phototropism. Involved in the negative regulation of photomorphogenesis by controlling the stability and transcriptional activity of PIF3 and PIF4 proteins in the dark, via the regulation of their phosphorylation status. The polypeptide is Phytochrome-associated serine/threonine-protein phosphatase 3 (Arabidopsis thaliana (Mouse-ear cress)).